Consider the following 247-residue polypeptide: Protein NipSnap homolog 3B (247 aa).

N6-succinyllysine is present on residues K45 and K57.

Belongs to the NipSnap family.

This chain is Protein NipSnap homolog 3B (NIPSNAP3B), found in Homo sapiens (Human).